The chain runs to 313 residues: S-methyl-5'-thioadenosine phosphorylase (313 aa).

Residues threonine 20, 68 to 69 (RH), and 101 to 102 (SA) each bind phosphate. Methionine 203 is a binding site for substrate. Phosphate is bound at residue serine 204. Residue 227–229 (DYD) participates in substrate binding.

It belongs to the PNP/MTAP phosphorylase family. MTAP subfamily. In terms of assembly, homotrimer.

It is found in the cytoplasm. The protein localises to the nucleus. It catalyses the reaction S-methyl-5'-thioadenosine + phosphate = 5-(methylsulfanyl)-alpha-D-ribose 1-phosphate + adenine. It functions in the pathway amino-acid biosynthesis; L-methionine biosynthesis via salvage pathway; S-methyl-5-thio-alpha-D-ribose 1-phosphate from S-methyl-5'-thioadenosine (phosphorylase route): step 1/1. In terms of biological role, catalyzes the reversible phosphorylation of S-methyl-5'-thioadenosine (MTA) to adenine and 5-methylthioribose-1-phosphate. Involved in the breakdown of MTA, a major by-product of polyamine biosynthesis. Responsible for the first step in the methionine salvage pathway after MTA has been generated from S-adenosylmethionine. Has broad substrate specificity with 6-aminopurine nucleosides as preferred substrates. The chain is S-methyl-5'-thioadenosine phosphorylase from Ajellomyces capsulatus (strain G186AR / H82 / ATCC MYA-2454 / RMSCC 2432) (Darling's disease fungus).